The primary structure comprises 160 residues: MTKKKVKVGTNTIALNKRARHDYFIEDEMEAGLELQGWEVKSMRAGKANISDSYIIFKQGEAYLFGATIQPLNVASTHIVCDPTRTRKLLLKQKELASLFGKANRDGYTIVALSLYWKGAWAKLKIGLAKGKKQHDKREDIKEREWKVTKDRIMKNARLG.

The protein belongs to the SmpB family.

Its subcellular location is the cytoplasm. Functionally, required for rescue of stalled ribosomes mediated by trans-translation. Binds to transfer-messenger RNA (tmRNA), required for stable association of tmRNA with ribosomes. tmRNA and SmpB together mimic tRNA shape, replacing the anticodon stem-loop with SmpB. tmRNA is encoded by the ssrA gene; the 2 termini fold to resemble tRNA(Ala) and it encodes a 'tag peptide', a short internal open reading frame. During trans-translation Ala-aminoacylated tmRNA acts like a tRNA, entering the A-site of stalled ribosomes, displacing the stalled mRNA. The ribosome then switches to translate the ORF on the tmRNA; the nascent peptide is terminated with the 'tag peptide' encoded by the tmRNA and targeted for degradation. The ribosome is freed to recommence translation, which seems to be the essential function of trans-translation. The sequence is that of SsrA-binding protein from Pasteurella multocida (strain Pm70).